Here is a 236-residue protein sequence, read N- to C-terminus: 2-C-methyl-D-erythritol 4-phosphate cytidylyltransferase (236 aa).

This sequence belongs to the IspD/TarI cytidylyltransferase family. IspD subfamily. As to quaternary structure, homodimer.

It carries out the reaction 2-C-methyl-D-erythritol 4-phosphate + CTP + H(+) = 4-CDP-2-C-methyl-D-erythritol + diphosphate. It participates in isoprenoid biosynthesis; isopentenyl diphosphate biosynthesis via DXP pathway; isopentenyl diphosphate from 1-deoxy-D-xylulose 5-phosphate: step 2/6. In terms of biological role, catalyzes the formation of 4-diphosphocytidyl-2-C-methyl-D-erythritol from CTP and 2-C-methyl-D-erythritol 4-phosphate (MEP). The polypeptide is 2-C-methyl-D-erythritol 4-phosphate cytidylyltransferase (Salmonella newport (strain SL254)).